Reading from the N-terminus, the 446-residue chain is Ribosomal protein uS12 methylthiotransferase RimO (446 aa).

In terms of domain architecture, MTTase N-terminal spans 7–118; sequence PKIAFAHLGC…IVEVIERVER (112 aa). Residues Cys-16, Cys-52, Cys-81, Cys-156, Cys-160, and Cys-163 each contribute to the [4Fe-4S] cluster site. In terms of domain architecture, Radical SAM core spans 142-371; it reads TTPAPVAYLR…MELQQPIAQR (230 aa). Positions 374–440 constitute a TRAM domain; that stretch reads AAEVGKIVPV…IYDLYGIIPA (67 aa).

The protein belongs to the methylthiotransferase family. RimO subfamily. Requires [4Fe-4S] cluster as cofactor.

The protein resides in the cytoplasm. The enzyme catalyses L-aspartate(89)-[ribosomal protein uS12]-hydrogen + (sulfur carrier)-SH + AH2 + 2 S-adenosyl-L-methionine = 3-methylsulfanyl-L-aspartate(89)-[ribosomal protein uS12]-hydrogen + (sulfur carrier)-H + 5'-deoxyadenosine + L-methionine + A + S-adenosyl-L-homocysteine + 2 H(+). Functionally, catalyzes the methylthiolation of an aspartic acid residue of ribosomal protein uS12. The sequence is that of Ribosomal protein uS12 methylthiotransferase RimO from Thermosynechococcus vestitus (strain NIES-2133 / IAM M-273 / BP-1).